A 626-amino-acid polypeptide reads, in one-letter code: Division abnormally delayed protein (626 aa).

Positions 1 to 26 are cleaved as a signal peptide; sequence MAARSVRLAQLLLFTLLCGFVGLSAA. Residues 41-52 show a composition bias toward basic residues; that stretch reads LHSATTHHRRRL. A disordered region spans residues 41–65; it reads LHSATTHHRRRLQRDSRAKDAVGGS. N97 carries N-linked (GlcNAc...) asparagine; atypical glycosylation. N-linked (GlcNAc...) asparagine glycosylation is found at N101, N150, and N187. The interval 533–607 is disordered; it reads NSIQATHDIQ…GKTSGSNPLE (75 aa). O-linked (Xyl...) (heparan sulfate) serine glycosylation is found at S549, S569, S573, and S601. A compositionally biased stretch (gly residues) spans 565-575; that stretch reads GAHGSGDGSGD. G602 carries the GPI-anchor amidated glycine lipid modification. Positions 603 to 626 are cleaved as a propeptide — removed in mature form; it reads SNPLEGTATWMLLTLVTMLFSSCS.

This sequence belongs to the glypican family. In terms of assembly, interacts with nord; the interaction promotes dally degradation. Interacts with Magu. As part of the dally/ Magu complex, associates with fwe (isoforms ubi, LoseA and LoseB) and is unable to interact with fwe independently of Magu.

Its subcellular location is the cell membrane. Cell surface proteoglycan that bears heparan sulfate. Functions as a coreceptor for growth factors and morphogens, such as the products of dpp, to regulate signaling and distribution of these ligands. Required for cell division patterning during postembryonic development of the nervous system. Plays a role in dpp/BMP signaling possibly by stabilizing dpp and thereby creating a morphological gradient during wing development. Might have a role in testis development. Functions with magu and fwe in a mechanism of scaling, which utilises apoptosis to ensure that the dpp patterning gradient remains proportional to the size of the growing wing. In this mechanism, fwe represses dally and Magu-dependent activity in expanding the gradient, and dally/Magu inhibits fwe-dependent apoptosis to keep cell death rate low. When the levels of these different proteins are optimally regulated the gradient correctly scales with organ growth but when this fails, fwe-mediated apoptosis is activated to trim the developing tissue to match the correct size of the gradient. The protein is Division abnormally delayed protein (dally) of Drosophila melanogaster (Fruit fly).